The primary structure comprises 649 residues: Sodium/nucleoside cotransporter 1 (649 aa).

Residues 1–80 (MENDPSRRRE…ARSFCREHMQ (80 aa)) lie on the Cytoplasmic side of the membrane. The chain crosses the membrane as a helical span at residues 81 to 104 (LFRWIGTGLLCTGLSAFLLVACLL). Residues 105–109 (DFQRA) lie on the Extracellular side of the membrane. The helical transmembrane segment at 110 to 128 (LALFVLTCVVLTFLGHRLL) threads the bilayer. Over 129–147 (KRLLGPKLRRFLKPQGHPR) the chain is Cytoplasmic. A helical membrane pass occupies residues 148–167 (LLLWFKRGLALAAFLGLVLW). The Extracellular portion of the chain corresponds to 168–178 (LSLDTSQRPEQ). A helical membrane pass occupies residues 179–195 (LVSFAGICVFVALLFAC). The Cytoplasmic portion of the chain corresponds to 196 to 201 (SKHHCA). A helical membrane pass occupies residues 202–222 (VSWRAVSWGLGLQFVLGLLVI). The Extracellular segment spans residues 223–261 (RTEPGFIAFEWLGEQIRIFLSYTKAGSSFVFGEALVKDV). A helical transmembrane segment spans residues 262–283 (FAFQVLPIIVFFSCVISVLYHV). Residues 284-294 (GLMQWVILKIA) are Cytoplasmic-facing. Residues 295 to 318 (WLMQVTMGTTATETLSVAGNIFVS) traverse the membrane as a helical segment. Residues 319 to 337 (QTEAPLLIRPYLADMTLSE) lie on the Extracellular side of the membrane. The helical transmembrane segment at 338-360 (VHVVMTGGYATIAGSLLGAYISF) threads the bilayer. Residues 361–366 (GIDATS) are Cytoplasmic-facing. A helical membrane pass occupies residues 367 to 386 (LIAASVMAAPCALALSKLVY). Over 387-423 (PEVEESKFRREEGVKLTYGDAQNLIEAASTGAAISVK) the chain is Extracellular. A helical transmembrane segment spans residues 424–446 (VVANIAANLIAFLAVLDFINAAL). The Cytoplasmic portion of the chain corresponds to 447-457 (SWLGDMVDIQG). The helical transmembrane segment at 458–479 (LSFQLICSYILRPVAFLMGVAW) threads the bilayer. Residues 480–534 (EDCPVVAELLGIKLFLNEFVAYQDLSKYKQRRLAGAEEWVGDRKQWISVRAEVLT) are Extracellular-facing. The helical transmembrane segment at 535–558 (TFALCGFANFSSIGIMLGGLTSMV) threads the bilayer. The Cytoplasmic segment spans residues 559–569 (PQRKSDFSQIV). The helical transmembrane segment at 570-592 (LRALFTGACVSLVNACMAGILYM) threads the bilayer. Residues 593 to 649 (PRGAEVDCMSLLNTTLSSSSFEIYQCCREAFQSVNPEFSPEALDNCCRFYNHTICAQ) lie on the Extracellular side of the membrane. N-linked (GlcNAc...) asparagine glycosylation is found at N605 and N643.

It belongs to the concentrative nucleoside transporter (CNT) (TC 2.A.41) family. Post-translationally, N-glycosylated. N-glycosylation is required for localization to the plasma membrane and the transporter activity. As to expression, expressed in kidney.

The protein localises to the cell membrane. The protein resides in the apical cell membrane. It carries out the reaction uridine(out) + Na(+)(out) = uridine(in) + Na(+)(in). It catalyses the reaction thymidine(out) + Na(+)(out) = thymidine(in) + Na(+)(in). The enzyme catalyses cytidine(out) + Na(+)(out) = cytidine(in) + Na(+)(in). The catalysed reaction is adenosine(out) + Na(+)(out) = adenosine(in) + Na(+)(in). With respect to regulation, due to its high apparent affinity but slow transport, adenosine could act as a negative regulator of pyrimidine transport under some conditions. Functionally, sodium and pyrimidine nucleoside symporter of the plasma membrane that imports uridine, thymidine and cytidine into cells by coupling their transport to the transmembrane sodium electrochemical gradient. Also transports adenosine, an atypical substrate transported with high apparent affinity, but low maximum velocity. Therefore, exhibits the transport characteristics of the nucleoside transport system cit or N2 subtype (N2/cit). Involved in renal nucleoside (re)absorption. This chain is Sodium/nucleoside cotransporter 1, found in Homo sapiens (Human).